A 262-amino-acid chain; its full sequence is Small ribosomal subunit protein eS1 (262 aa).

The span at 1–18 shows a compositional bias: basic residues; sequence MAVGKNKRISKGKKGSKK. Residues 1-20 are disordered; that stretch reads MAVGKNKRISKGKKGSKKKT.

It belongs to the eukaryotic ribosomal protein eS1 family. In terms of assembly, component of the small ribosomal subunit. Mature ribosomes consist of a small (40S) and a large (60S) subunit. The 40S subunit contains about 33 different proteins and 1 molecule of RNA (18S). The 60S subunit contains about 49 different proteins and 3 molecules of RNA (25S, 5.8S and 5S).

The protein resides in the cytoplasm. The protein is Small ribosomal subunit protein eS1 of Oryza sativa subsp. japonica (Rice).